We begin with the raw amino-acid sequence, 251 residues long: MNKKKNTILIGLYFLVGIMLFPDRIYAMHIAEGFLPVKWAGIWWIAMLPFLALGIKKVKSITQKEGPGIKMLLALAGAFVFVLSSLKLPSLTGSCSHPTGVGLGAILFGPWPMVVLGCIVLIFQAVLLAHGGLTTLGANVFSMAIVGPFVAYGAYRLLKKLNAPNWLSVFTGSALGNLLTYITTATQLAWAFPGKTGFIASLIKFMGVFATTQVPLAVTEGLVTVLIFNLLLEYSEGELKELSVISKGETV.

A signal peptide spans 1–27; the sequence is MNKKKNTILIGLYFLVGIMLFPDRIYA. Transmembrane regions (helical) follow at residues 35-55, 66-86, 103-123, 131-151, 166-186, and 208-228; these read LPVKWAGIWWIAMLPFLALGI, GPGIKMLLALAGAFVFVLSSL, LGAILFGPWPMVVLGCIVLIF, GGLTTLGANVFSMAIVGPFVA, WLSVFTGSALGNLLTYITTAT, and VFATTQVPLAVTEGLVTVLIF.

Belongs to the CbiM family. As to quaternary structure, forms an energy-coupling factor (ECF) transporter complex composed of an ATP-binding protein (A component, CbiO), a transmembrane protein (T component, CbiQ) and 2 possible substrate-capture proteins (S components, CbiM and CbiN) of unknown stoichimetry.

It localises to the cell membrane. The protein operates within cofactor biosynthesis; adenosylcobalamin biosynthesis. In terms of biological role, part of the energy-coupling factor (ECF) transporter complex CbiMNOQ involved in cobalt import. The sequence is that of Cobalt transport protein CbiM from Acetohalobium arabaticum (strain ATCC 49924 / DSM 5501 / Z-7288).